The sequence spans 257 residues: Ribonuclease PH (257 aa).

Phosphate is bound by residues Arg-86 and 124–126 (GTR).

It belongs to the RNase PH family. In terms of assembly, homohexameric ring arranged as a trimer of dimers.

It catalyses the reaction tRNA(n+1) + phosphate = tRNA(n) + a ribonucleoside 5'-diphosphate. Its function is as follows. Phosphorolytic 3'-5' exoribonuclease that plays an important role in tRNA 3'-end maturation. Removes nucleotide residues following the 3'-CCA terminus of tRNAs; can also add nucleotides to the ends of RNA molecules by using nucleoside diphosphates as substrates, but this may not be physiologically important. Probably plays a role in initiation of 16S rRNA degradation (leading to ribosome degradation) during starvation. The sequence is that of Ribonuclease PH from Sulfurihydrogenibium sp. (strain YO3AOP1).